Reading from the N-terminus, the 63-residue chain is Large ribosomal subunit protein uL29 (63 aa).

The protein belongs to the universal ribosomal protein uL29 family.

In Haemophilus ducreyi (strain 35000HP / ATCC 700724), this protein is Large ribosomal subunit protein uL29.